A 705-amino-acid polypeptide reads, in one-letter code: UvrABC system protein C (705 aa).

One can recognise a GIY-YIG domain in the interval E16 to V95. In terms of domain architecture, UVR spans G208–A243. The span at A315–S332 shows a compositional bias: low complexity. 2 disordered regions span residues A315–E335 and R683–S705.

The protein belongs to the UvrC family. Interacts with UvrB in an incision complex.

Its subcellular location is the cytoplasm. In terms of biological role, the UvrABC repair system catalyzes the recognition and processing of DNA lesions. UvrC both incises the 5' and 3' sides of the lesion. The N-terminal half is responsible for the 3' incision and the C-terminal half is responsible for the 5' incision. In Frankia casuarinae (strain DSM 45818 / CECT 9043 / HFP020203 / CcI3), this protein is UvrABC system protein C.